A 68-amino-acid chain; its full sequence is Large ribosomal subunit protein bL33c (68 aa).

Belongs to the bacterial ribosomal protein bL33 family.

The protein localises to the plastid. Its subcellular location is the chloroplast. The chain is Large ribosomal subunit protein bL33c from Lactuca sativa (Garden lettuce).